The following is a 190-amino-acid chain: Pyridoxal 5'-phosphate synthase subunit PdxT (190 aa).

46-48 (GES) serves as a coordination point for L-glutamine. The Nucleophile role is filled by Cys78. L-glutamine is bound by residues Arg105 and 134-135 (IR). Catalysis depends on charge relay system residues His170 and Glu172.

Belongs to the glutaminase PdxT/SNO family. As to quaternary structure, in the presence of PdxS, forms a dodecamer of heterodimers. Only shows activity in the heterodimer.

It carries out the reaction aldehydo-D-ribose 5-phosphate + D-glyceraldehyde 3-phosphate + L-glutamine = pyridoxal 5'-phosphate + L-glutamate + phosphate + 3 H2O + H(+). It catalyses the reaction L-glutamine + H2O = L-glutamate + NH4(+). It participates in cofactor biosynthesis; pyridoxal 5'-phosphate biosynthesis. Catalyzes the hydrolysis of glutamine to glutamate and ammonia as part of the biosynthesis of pyridoxal 5'-phosphate. The resulting ammonia molecule is channeled to the active site of PdxS. The polypeptide is Pyridoxal 5'-phosphate synthase subunit PdxT (Clostridium beijerinckii (strain ATCC 51743 / NCIMB 8052) (Clostridium acetobutylicum)).